A 160-amino-acid polypeptide reads, in one-letter code: MSITKYPMTVQGARALEEEHLFLSKTERPRLSQAIGEARELGDLKENAEYHAAREEQGMVEARIRDIEGRLQNSVVIDVTTIPHTGKVIFGTTVVLANTETDEEVTYQIVGEDEADVKQGKLSSGAPIARAIIGKEEGDTVVVKTPSGTVEYEIVEVKHI.

Positions 53-73 form a coiled coil; sequence AREEQGMVEARIRDIEGRLQN.

The protein belongs to the GreA/GreB family.

Necessary for efficient RNA polymerase transcription elongation past template-encoded arresting sites. The arresting sites in DNA have the property of trapping a certain fraction of elongating RNA polymerases that pass through, resulting in locked ternary complexes. Cleavage of the nascent transcript by cleavage factors such as GreA or GreB allows the resumption of elongation from the new 3'terminus. GreA releases sequences of 2 to 3 nucleotides. This is Transcription elongation factor GreA from Pseudomonas putida (strain ATCC 47054 / DSM 6125 / CFBP 8728 / NCIMB 11950 / KT2440).